Here is a 159-residue protein sequence, read N- to C-terminus: Ribosomal RNA large subunit methyltransferase H (159 aa).

S-adenosyl-L-methionine contacts are provided by residues Leu-76, Gly-108, and 127–132 (FSKMTF).

It belongs to the RNA methyltransferase RlmH family. Homodimer.

The protein localises to the cytoplasm. It carries out the reaction pseudouridine(1915) in 23S rRNA + S-adenosyl-L-methionine = N(3)-methylpseudouridine(1915) in 23S rRNA + S-adenosyl-L-homocysteine + H(+). Its function is as follows. Specifically methylates the pseudouridine at position 1915 (m3Psi1915) in 23S rRNA. This is Ribosomal RNA large subunit methyltransferase H from Staphylococcus haemolyticus (strain JCSC1435).